The chain runs to 185 residues: Fimbrial subunit type 1 (185 aa).

A signal peptide spans Met-1–Ala-22. Cysteines 46 and 86 form a disulfide.

Belongs to the fimbrial protein family.

Its subcellular location is the fimbrium. This is Fimbrial subunit type 1 from Salmonella typhimurium.